Here is a 302-residue protein sequence, read N- to C-terminus: F-box protein At1g20360 (302 aa).

The 48-residue stretch at 1 to 48 folds into the F-box domain; the sequence is MNSLPLHLLDQILFRLEPKSLAMMKSTNRTINSHISDPLFESEYFSRL.

This Arabidopsis thaliana (Mouse-ear cress) protein is F-box protein At1g20360.